The chain runs to 503 residues: MKKNTIILVGALIAIAFMTYMLLSINTRKTEQVLLNTTPVIKEKGVEARSDIWGKEYPRQYDTWKKTKDSNKIEDMVEKYPQLAILWAGYGFAKDYNAPRGHFNALQSNINTLRTGAPTGPNDGPMPMACWSCKSSDVPRIMERDGELQYFTGKWARMGSEIVNPIGCADCHNSQTSQLEISRPYLKRGLEASGRKLEDLTFQDMRSLACAQCHSEYYFKKTPYTDEAGNKQVAAVVTFPWAKGLAAENMEEYYNEYGFKDWTHGISKTPMLKAQHPGYEIFTTGIHFKRGLSCADCHMPYTQEGSVKFSDHQIQDPLNNIANSCLTCHRQSEEEFKQIVEEKLKRKDQLNVIAMNSLANAHLLAKKAWEVGATEAEMEKPINTIRSAQWLWDYSIASHGSFFHAPGETLRLLGVANNKAMQARLELQNILANHGVTDYEVPDFSTKEKAQKLAGVPFDKLVKEKMRFKKGMVVEWYDEAVKAGRLDKNWWKILPDNTAYPQN.

Residues 1 to 16 form the signal peptide; sequence MKKNTIILVGALIAIA. Heme c is bound at residue His-102. 3 residues coordinate heme: Cys-130, Cys-133, and Lys-134. Cys-168, Cys-171, His-172, Cys-210, Cys-213, and His-214 together coordinate heme c. Positions 216, 217, 273, and 275 each coordinate Ca(2+). Tyr-217 contributes to the substrate binding site. His-276 contributes to the substrate binding site. The heme c site is built by His-287, Cys-294, Cys-297, His-298, His-312, Cys-325, Cys-328, His-329, and His-404.

This sequence belongs to the cytochrome c-552 family. Requires Ca(2+) as cofactor. Heme c serves as cofactor.

It localises to the periplasm. It carries out the reaction 6 Fe(III)-[cytochrome c] + NH4(+) + 2 H2O = 6 Fe(II)-[cytochrome c] + nitrite + 8 H(+). The protein operates within nitrogen metabolism; nitrate reduction (assimilation). Functionally, catalyzes the reduction of nitrite to ammonia, consuming six electrons in the process. This is Cytochrome c-552 from Maridesulfovibrio salexigens (strain ATCC 14822 / DSM 2638 / NCIMB 8403 / VKM B-1763) (Desulfovibrio salexigens).